A 238-amino-acid polypeptide reads, in one-letter code: Survival of motor neuron-related-splicing factor 30 (238 aa).

The Tudor domain maps to 72–132 (SWKVGDKCMA…KPVEEGRKAK (61 aa)). Residues 142–160 (KKEMIAQQREYKKKKALKK) carry the Nuclear localization signal motif. Ser201 carries the phosphoserine modification. Lys219 bears the N6-acetyllysine mark.

The protein belongs to the SMN family. Associates with spliceosomes. Associates with U4/U5/U6 tri-snRNP and with U2 snRNP.

It localises to the nucleus speckle. The protein resides in the nucleus. It is found in the cajal body. In terms of biological role, involved in spliceosome assembly. This is Survival of motor neuron-related-splicing factor 30 (Smndc1) from Rattus norvegicus (Rat).